A 320-amino-acid polypeptide reads, in one-letter code: MRYRFGYVSNAVTLWEASPAKSLTFARYSKLSKEEGKEALLRTTKANLVNTLRTLYFAISHDIPLYRFSSSIVPLATHPEVRWDFVTPFQKEFLEIGDLVKRHGLRVSFHPNQFTLFTSPKPSITENAVIDMTYHYQMLEAMKLEKEGYMNIHVGGAYGDKDSALQRFDENIKQLPAHIKARMTLENDDKTYTSLETLGVCEKHGIPFVFDYHHHVANKDDNAALEDILPRMFDTWTSTGIPPKIHLSSPKSEKAIRSHADGVDMSFVLPLFHALKPCGRDVDFMIEAKLKDQALLRLVEELSAIRGNKRVGGGTIEWKP.

This sequence belongs to the uve1/UvsE family.

Its function is as follows. Component in a DNA repair pathway. Removal of UV LIGHT damaged nucleotides. Recognizes pyrimidine dimers and cleave a phosphodiester bond immediately 5' to the lesion. The chain is UV DNA damage endonuclease from Bacillus pumilus (strain SAFR-032).